The chain runs to 436 residues: 3-ketoacyl-CoA thiolase (436 aa).

The active-site Acyl-thioester intermediate is C99. Residues H392 and C422 each act as proton acceptor in the active site.

It belongs to the thiolase-like superfamily. Thiolase family. In terms of assembly, heterotetramer of two alpha chains (FadJ) and two beta chains (FadI).

It localises to the cytoplasm. The enzyme catalyses an acyl-CoA + acetyl-CoA = a 3-oxoacyl-CoA + CoA. The protein operates within lipid metabolism; fatty acid beta-oxidation. In terms of biological role, catalyzes the final step of fatty acid oxidation in which acetyl-CoA is released and the CoA ester of a fatty acid two carbons shorter is formed. The chain is 3-ketoacyl-CoA thiolase from Salmonella typhi.